The sequence spans 109 residues: uncharacterized protein (109 aa).

The next 2 helical transmembrane spans lie at 18–38 and 48–68; these read TTLAWTRTAFALLVNGVLLTL and AGLIPAGLAGAAASCCYVIAL.

The protein resides in the cell membrane. This is an uncharacterized protein from Mycobacterium tuberculosis (strain CDC 1551 / Oshkosh).